The sequence spans 184 residues: Ribosome maturation factor RimP (184 aa).

The protein belongs to the RimP family.

Its subcellular location is the cytoplasm. In terms of biological role, required for maturation of 30S ribosomal subunits. The protein is Ribosome maturation factor RimP of Zymomonas mobilis subsp. mobilis (strain ATCC 31821 / ZM4 / CP4).